We begin with the raw amino-acid sequence, 455 residues long: Adhesin YadA (455 aa).

A signal peptide spans 1–25 (MTKDFKISVSAALISALFSSPYAFA). Residues 26 to 363 (DDYDGIPNLT…KKAIRESNQY (338 aa)) are surface exposed passenger domain. Residues 209–243 (VNVAQLKKEIEKTQENTNKRSAELLANANAYADNK) are a coiled coil. The outer membrane translocation of the passenger domain stretch occupies residues 364–402 (TDHKFRQLDNRLDKLDTRVDKGLASSAALNSLFQPYGVG). 4 beta stranded membrane passes run 402 to 412 (GKVNFTAGVGG), 416 to 427 (SQALAIGSGYRV), 434 to 440 (KAGVAYA), and 444 to 455 (DVMYNASFNIEW). The translocator domain stretch occupies residues 403-455 (KVNFTAGVGGYRSSQALAIGSGYRVNENVALKAGVAYAGSSDVMYNASFNIEW).

This sequence belongs to the autotransporter-2 (AT-2) (TC 1.B.40) family. Homotrimer; in gels migrates as monomers, dimers and homotrimers. Does not form trimers with distantly related EibA from E.coli; coexpression was lethal and one of the genes is eliminated in vivo. If the full translocator domain (368-455) is exchanged with that of EibA ('299-392'), will form heterotrimers with EibA and vice-versa.

It is found in the cell surface. It localises to the cell outer membrane. Functionally, collagen-binding outer membrane protein forming a fibrillar matrix on the bacterial cell surface. Promotes initial attachment and invasion of eukaryotic cells. Also protects the bacteria by being responsible for agglutination, serum resistance, complement inactivation and phagocytosis resistance. The protein is Adhesin YadA (yadA) of Yersinia enterocolitica.